A 247-amino-acid chain; its full sequence is Probable transcriptional regulatory protein PMT_1423 (247 aa).

This sequence belongs to the TACO1 family.

It is found in the cytoplasm. The polypeptide is Probable transcriptional regulatory protein PMT_1423 (Prochlorococcus marinus (strain MIT 9313)).